The primary structure comprises 248 residues: Triosephosphate isomerase (248 aa).

K12 serves as a coordination point for substrate. H94 functions as the Electrophile in the catalytic mechanism. Catalysis depends on E165, which acts as the Proton acceptor.

This sequence belongs to the triosephosphate isomerase family. As to quaternary structure, homodimer.

It carries out the reaction D-glyceraldehyde 3-phosphate = dihydroxyacetone phosphate. Its pathway is carbohydrate biosynthesis; gluconeogenesis. The protein operates within carbohydrate degradation; glycolysis; D-glyceraldehyde 3-phosphate from glycerone phosphate: step 1/1. This is Triosephosphate isomerase (Tpi) from Bombyx mori (Silk moth).